The sequence spans 832 residues: MIAWRLPLCVLLVAAVESHLGALGPKNVSQKDAEFERTYADDVNSELVNIYTFNHTVTRNRTEGVRVSVNVLNKQKGAPLLFVVRQKEAVVSFQVPLILRGLYQRKYLYQKVERTLCQPPTKNESEIQFFYVDVSTLSPVNTTYQLRVNRVDNFVLRTGELFTFNTTAAQPQYFKYEFPDGVDSVIVKVTSKKAFPCSVISIQDVLCPVYDLDNNVAFIGMYQTMTKKAAITVQRKDFPSNSFYVVVVVKTEDQACGGSLPFYPFVEDEPVDQGHRQKTLSVLVSQAVTSEAYVGGMLFCLGIFLSFYLLTVLLACWENWRQRKKTLLVAIDRACPESGHPRVLADSFPGSAPYEGYNYGSFENGSGSTDGLVESTGSGDLSYSYQDRSFDPVGARPRLDSMSSVEEDDYDTLTDIDSDKNVIRTKQYLCVADLARKDKRVLRKKYQIYFWNIATIAVFYALPVVQLVITYQTVVNVTGNQDICYYNFLCAHPLGNLSAFNNILSNLGYILLGLLFLLIILQREINHNRALLRNDLYALECGIPKHFGLFYAMGTALMMEGLLSACYHVCPNYTNFQFDTSFMYMIAGLCMLKLYQKRHPDINASAYSAYACLAIVIFFSVLGVVFGKGNTAFWIVFSVIHIISTLLLSTQLYYMGRWKLDSGIFRRILHVLYTDCIRQCSGPLYTDRMVLLVMGNIINWSLAAYGLIMRPNDFASYLLAIGICNLLLYFAFYIIMKLRSGERIKLIPLLCIVCTSVVWGFALFFFFQGLSTWQKTPAESREHNRDCILLDFFDDHDIWHFLSSIAMFGSFLVLLTLDDDLDTVQRDKIYVF.

A signal peptide spans 1-15; sequence MIAWRLPLCVLLVAA. At 16 to 293 the chain is on the extracellular side; it reads VESHLGALGP…VSQAVTSEAY (278 aa). Residues Asn-27, Asn-54, Asn-60, Asn-123, Asn-141, and Asn-165 are each glycosylated (N-linked (GlcNAc...) asparagine). The helical transmembrane segment at 294 to 314 threads the bilayer; it reads VGGMLFCLGIFLSFYLLTVLL. The Cytoplasmic segment spans residues 315–447; it reads ACWENWRQRK…DKRVLRKKYQ (133 aa). Residues Ser-401, Ser-403, and Ser-404 each carry the phosphoserine modification. Residues 448 to 468 traverse the membrane as a helical segment; sequence IYFWNIATIAVFYALPVVQLV. The Extracellular segment spans residues 469-499; it reads ITYQTVVNVTGNQDICYYNFLCAHPLGNLSA. Residues Asn-476 and Asn-496 are each glycosylated (N-linked (GlcNAc...) asparagine). Residues 500-520 form a helical membrane-spanning segment; that stretch reads FNNILSNLGYILLGLLFLLII. Residues 521–546 lie on the Cytoplasmic side of the membrane; sequence LQREINHNRALLRNDLYALECGIPKH. The helical transmembrane segment at 547–567 threads the bilayer; that stretch reads FGLFYAMGTALMMEGLLSACY. The Extracellular segment spans residues 568–605; it reads HVCPNYTNFQFDTSFMYMIAGLCMLKLYQKRHPDINAS. N-linked (GlcNAc...) asparagine glycosylation is found at Asn-572 and Asn-603. Residues 606 to 626 form a helical membrane-spanning segment; that stretch reads AYSAYACLAIVIFFSVLGVVF. Over 627 to 631 the chain is Cytoplasmic; sequence GKGNT. Residues 632–652 form a helical membrane-spanning segment; the sequence is AFWIVFSVIHIISTLLLSTQL. Topologically, residues 653 to 688 are extracellular; it reads YYMGRWKLDSGIFRRILHVLYTDCIRQCSGPLYTDR. A helical membrane pass occupies residues 689–709; sequence MVLLVMGNIINWSLAAYGLIM. Residues 710 to 715 lie on the Cytoplasmic side of the membrane; sequence RPNDFA. The helical transmembrane segment at 716 to 736 threads the bilayer; that stretch reads SYLLAIGICNLLLYFAFYIIM. Residues 737-746 are Extracellular-facing; it reads KLRSGERIKL. Residues 747–767 traverse the membrane as a helical segment; sequence IPLLCIVCTSVVWGFALFFFF. The Cytoplasmic portion of the chain corresponds to 768 to 796; that stretch reads QGLSTWQKTPAESREHNRDCILLDFFDDH. The helical transmembrane segment at 797-817 threads the bilayer; sequence DIWHFLSSIAMFGSFLVLLTL. Residues 818–832 are Extracellular-facing; it reads DDDLDTVQRDKIYVF.

The protein belongs to the SID1 family. Interacts with adapter protein complex 1 (AP-1) and AP-2, but not AP-3 and AP-4. Interacts with LAMP2. Glycosylated. Highly expressed in the liver, brain, kidney and intestine (at protein level).

The protein localises to the lysosome membrane. The protein resides in the cell membrane. In terms of biological role, mediates the translocation of RNA and DNA across the lysosomal membrane during RNA and DNA autophagy (RDA), a process in which RNA or DNA is directly imported into lysosomes in an ATP-dependent manner, and degraded. Involved in the uptake of single-stranded oligonucleotides by living cells, a process called gymnosis. In vitro, mediates the uptake of linear DNA more efficiently than that of circular DNA, but exhibits similar uptake efficacy toward RNA and DNA. Binds long double-stranded RNA (dsRNA) (500 - 700 base pairs), but not dsRNA shorter than 100 bp. The polypeptide is SID1 transmembrane family member 2 (Sidt2) (Rattus norvegicus (Rat)).